We begin with the raw amino-acid sequence, 54 residues long: Metallothionein-2 (54 aa).

The protein belongs to the metallothionein superfamily. Type 11 family.

This chain is Metallothionein-2 (MTP2), found in Yarrowia lipolytica (strain CLIB 122 / E 150) (Yeast).